A 201-amino-acid polypeptide reads, in one-letter code: ADP-ribosylation factor-like protein 4D (201 aa).

G2 is lipidated: N-myristoyl glycine. Residues 28-35, 76-80, and 135-138 contribute to the GTP site; these read GLDSAGKT, DVGGQ, and NKQD.

This sequence belongs to the small GTPase superfamily. Arf family. Interacts with CYTH2; the interaction is direct and ARL4D GTP-dependent. Does not interact with ARL4D.

The protein localises to the nucleus. It localises to the nucleolus. Its subcellular location is the cell membrane. The protein resides in the cytoplasm. Small GTP-binding protein which cycles between an inactive GDP-bound and an active GTP-bound form, and the rate of cycling is regulated by guanine nucleotide exchange factors (GEF) and GTPase-activating proteins (GAP). GTP-binding protein that does not act as an allosteric activator of the cholera toxin catalytic subunit. Recruits CYTH1, CYTH2, CYTH3 and CYTH4 to the plasma membrane in GDP-bound form. This chain is ADP-ribosylation factor-like protein 4D (Arl4d), found in Mus musculus (Mouse).